Reading from the N-terminus, the 366-residue chain is 3-dehydroquinate synthase (366 aa).

NAD(+) contacts are provided by residues 75–80, 109–113, 133–134, K146, K155, and 173–176; these read DGEQYK, GVIGD, TT, and CLST. Zn(2+) contacts are provided by E188, H251, and H268.

It belongs to the sugar phosphate cyclases superfamily. Dehydroquinate synthase family. Co(2+) serves as cofactor. The cofactor is Zn(2+). NAD(+) is required as a cofactor.

Its subcellular location is the cytoplasm. The enzyme catalyses 7-phospho-2-dehydro-3-deoxy-D-arabino-heptonate = 3-dehydroquinate + phosphate. It functions in the pathway metabolic intermediate biosynthesis; chorismate biosynthesis; chorismate from D-erythrose 4-phosphate and phosphoenolpyruvate: step 2/7. In terms of biological role, catalyzes the conversion of 3-deoxy-D-arabino-heptulosonate 7-phosphate (DAHP) to dehydroquinate (DHQ). In Vibrio campbellii (strain ATCC BAA-1116), this protein is 3-dehydroquinate synthase.